Here is a 414-residue protein sequence, read N- to C-terminus: MSGIIATYLIHDDSHNLEKKAEQIALGLTIGSWTHLPHLLQEQLKQHKGNVIHVEELAEHEHTNSYLRKKVKRGIIKIEYPLLNFSPDLPAILTTTFGKLSLDGEVKLIDLTFSDELKKHFPGPKFGIDGIRNLLQVHDRPLLMSIFKGMIGRNIGYLKTQLRDQAIGGVDIVKDDEILFENALTPLTKRIVSGKEVLQSVYETYGHKTLYAVNLTGRTFDLKENAKRAVQAGADILLFNVFAYGLDVLQSLAEDDEIPVPIMAHPAVSGAYSASKLYGVSSPLLLGKLLRYAGADFSLFPSPYGSVALEKEEALAISKYLTEDDASFKKSFSVPSAGIHPGFVPFIVRDFGKDVVINAGGGIHGHPNGAQGGGKAFRTAIDATLQNKPLHEVDDINLHSALQIWGNPSYEVKL.

Catalysis depends on K99, which acts as the Proton acceptor. Substrate-binding positions include K148, 174 to 177 (KDDE), H265, G338, and 360 to 361 (GG). Mg(2+)-binding residues include K174, D176, and E177. An N6-carboxylysine modification is found at K174.

The protein belongs to the RuBisCO large chain family. Type IV subfamily. In terms of assembly, homodimer. It depends on Mg(2+) as a cofactor.

The enzyme catalyses 5-methylsulfanyl-2,3-dioxopentyl phosphate = 2-hydroxy-5-methylsulfanyl-3-oxopent-1-enyl phosphate. It participates in amino-acid biosynthesis; L-methionine biosynthesis via salvage pathway; L-methionine from S-methyl-5-thio-alpha-D-ribose 1-phosphate: step 3/6. Catalyzes the enolization of 2,3-diketo-5-methylthiopentyl-1-phosphate (DK-MTP-1-P) into 2-hydroxy-3-keto-5-methylthiopentenyl-1-phosphate (HK-MTPenyl-1-P). The polypeptide is 2,3-diketo-5-methylthiopentyl-1-phosphate enolase (Bacillus cereus (strain ATCC 14579 / DSM 31 / CCUG 7414 / JCM 2152 / NBRC 15305 / NCIMB 9373 / NCTC 2599 / NRRL B-3711)).